The following is a 207-amino-acid chain: Octanoyltransferase (207 aa).

The region spanning 29 to 204 is the BPL/LPL catalytic domain; it reads AETRDELWVV…HLERHLSTSK (176 aa). Substrate is bound by residues 68–75, 135–137, and 148–150; these read RGGQITYH, SLG, and GLS. Cys166 acts as the Acyl-thioester intermediate in catalysis.

It belongs to the LipB family.

It is found in the cytoplasm. It catalyses the reaction octanoyl-[ACP] + L-lysyl-[protein] = N(6)-octanoyl-L-lysyl-[protein] + holo-[ACP] + H(+). It functions in the pathway protein modification; protein lipoylation via endogenous pathway; protein N(6)-(lipoyl)lysine from octanoyl-[acyl-carrier-protein]: step 1/2. Catalyzes the transfer of endogenously produced octanoic acid from octanoyl-acyl-carrier-protein onto the lipoyl domains of lipoate-dependent enzymes. Lipoyl-ACP can also act as a substrate although octanoyl-ACP is likely to be the physiological substrate. This Chromobacterium violaceum (strain ATCC 12472 / DSM 30191 / JCM 1249 / CCUG 213 / NBRC 12614 / NCIMB 9131 / NCTC 9757 / MK) protein is Octanoyltransferase.